Here is a 192-residue protein sequence, read N- to C-terminus: Flavin prenyltransferase UbiX (192 aa).

Residues 10-12, Ser-36, 92-95, and Arg-127 contribute to the FMN site; these read GAS and SVAT. 2 residues coordinate dimethylallyl phosphate: Tyr-157 and Lys-173.

The protein belongs to the UbiX/PAD1 family.

The enzyme catalyses dimethylallyl phosphate + FMNH2 = prenylated FMNH2 + phosphate. Flavin prenyltransferase that catalyzes the synthesis of the prenylated FMN cofactor (prenyl-FMN) for 4-hydroxy-3-polyprenylbenzoic acid decarboxylase UbiD. The prenyltransferase is metal-independent and links a dimethylallyl moiety from dimethylallyl monophosphate (DMAP) to the flavin N5 and C6 atoms of FMN. This chain is Flavin prenyltransferase UbiX, found in Chlamydia muridarum (strain MoPn / Nigg).